Here is a 555-residue protein sequence, read N- to C-terminus: MKTDIEIARSIELVKIKQVARETGIPVEHISNYGRYIAKVDESQINEEKVQQSNLILVTAITPTKAGIGKTTVSIGLALGLNKIGKKTIVALREPSLGPCFGMKGGAAGGGYAQVLPMDKINLHFTGDFHAITSAHNMISALLDNYLYQNRDNGFGLKEVLWRRVLDVNDRSLRYIVTGLGPKTNGITQESGFDITPASEIMAILCLAKDEKDLRRRIENILLGFTYDNKPFTVKDLGVAGAITVLLKDALSPNLVQTTEHTAAFVHGGPFANIAHGCNSILATKMAMTFSDYTITEAGFGADLGAEKFYDIKCRKAGVTPKLTVLVVTARALKMHGGVSQDKIKEPNLEALKQGVANMDKHLRNLRYFGQTVVVAFNRYGDDSEEEVDYIRTHCEKKGVGFAVNNAFTDGGEGAVELAELVVKTIEEQPSEPLQYAYDDEDSVETKISKVACNLYGASIITYSAAARKKLKHIVELGYGNFPICIAKTQYSFSTDPKIYGAVDNFEFHVQDIVMNAGAEMLVVIAGEIMRMPGLPKEPQALHIDIVNGEIEGLS.

64 to 71 lines the ATP pocket; sequence TKAGIGKT.

It belongs to the formate--tetrahydrofolate ligase family.

It catalyses the reaction (6S)-5,6,7,8-tetrahydrofolate + formate + ATP = (6R)-10-formyltetrahydrofolate + ADP + phosphate. Its pathway is one-carbon metabolism; tetrahydrofolate interconversion. This Phocaeicola vulgatus (strain ATCC 8482 / DSM 1447 / JCM 5826 / CCUG 4940 / NBRC 14291 / NCTC 11154) (Bacteroides vulgatus) protein is Formate--tetrahydrofolate ligase.